A 328-amino-acid polypeptide reads, in one-letter code: HTH-type transcriptional regulator MalR (328 aa).

The 56-residue stretch at 2–57 folds into the HTH lacI-type domain; the sequence is PVTIKDVAKAAGVSPSTVTRVIQNKSTISDETKKRVRKAMKELNYHPNLNARSLVS. Positions 5–24 form a DNA-binding region, H-T-H motif; sequence IKDVAKAAGVSPSTVTRVIQ. The tract at residues 173 to 218 is inducer binding; it reads TEYFIKKGCKRIAFIGGSKKLFVTKDRLTGYEQALKHYKLTTDNNR. The segment at 282-291 is dimerization; the sequence is NLAAYVDINS.

In terms of biological role, transcriptional repressor of the maltosaccharide utilization operons malxCD and malMP. This chain is HTH-type transcriptional regulator MalR (malR), found in Streptococcus pneumoniae serotype 4 (strain ATCC BAA-334 / TIGR4).